The following is a 483-amino-acid chain: 1-aminocyclopropane-1-carboxylate synthase 2 (483 aa).

Lys-275 is subject to N6-(pyridoxal phosphate)lysine.

It belongs to the class-I pyridoxal-phosphate-dependent aminotransferase family. The cofactor is pyridoxal 5'-phosphate.

The enzyme catalyses S-adenosyl-L-methionine = 1-aminocyclopropane-1-carboxylate + S-methyl-5'-thioadenosine + H(+). It functions in the pathway alkene biosynthesis; ethylene biosynthesis via S-adenosyl-L-methionine; ethylene from S-adenosyl-L-methionine: step 1/2. In terms of biological role, catalyzes the formation of 1-aminocyclopropane-1-carboxylate, a direct precursor of ethylene in higher plants. Involved in defense response by producing ethylene after pathogen infection. Involved in several phosphate deficiency-induced adaptive responses, such as lateral root elongation. The chain is 1-aminocyclopropane-1-carboxylate synthase 2 from Oryza sativa subsp. japonica (Rice).